We begin with the raw amino-acid sequence, 127 residues long: Large ribosomal subunit protein bL21 (127 aa).

The interval 102 to 127 (TDNAKPTKGPRPKKAKAEAPAADAAE) is disordered.

This sequence belongs to the bacterial ribosomal protein bL21 family. Part of the 50S ribosomal subunit. Contacts protein L20.

This protein binds to 23S rRNA in the presence of protein L20. The protein is Large ribosomal subunit protein bL21 of Bradyrhizobium sp. (strain BTAi1 / ATCC BAA-1182).